Here is a 1404-residue protein sequence, read N- to C-terminus: DNA-directed RNA polymerase subunit beta' (1404 aa).

4 residues coordinate Zn(2+): cysteine 60, cysteine 62, cysteine 75, and cysteine 78. Aspartate 449, aspartate 451, and aspartate 453 together coordinate Mg(2+). Positions 778, 852, 859, and 862 each coordinate Zn(2+). The tract at residues 1381–1404 is disordered; it reads DRPLEEEEEEEIPQSIADDSDGDE. Over residues 1384–1404 the composition is skewed to acidic residues; the sequence is LEEEEEEEIPQSIADDSDGDE.

This sequence belongs to the RNA polymerase beta' chain family. In terms of assembly, the RNAP catalytic core consists of 2 alpha, 1 beta, 1 beta' and 1 omega subunit. When a sigma factor is associated with the core the holoenzyme is formed, which can initiate transcription. The cofactor is Mg(2+). Zn(2+) serves as cofactor.

It catalyses the reaction RNA(n) + a ribonucleoside 5'-triphosphate = RNA(n+1) + diphosphate. Functionally, DNA-dependent RNA polymerase catalyzes the transcription of DNA into RNA using the four ribonucleoside triphosphates as substrates. This Leptospira borgpetersenii serovar Hardjo-bovis (strain JB197) protein is DNA-directed RNA polymerase subunit beta'.